Consider the following 352-residue polypeptide: B1 bradykinin receptor (352 aa).

Residues 1-41 (MASWPPLELQSSNQSQLFPQNATACDNAPEAWDLLHRVLPT) are Extracellular-facing. N-linked (GlcNAc...) asparagine glycans are attached at residues asparagine 13 and asparagine 21. Residues 42-62 (FIISICSFGLLGNLFVLLVFL) form a helical membrane-spanning segment. Topologically, residues 63–72 (LPRRRLNVAE) are cytoplasmic. The helical transmembrane segment at 73-93 (IYLANLAASDLVFVLGLPFWA) threads the bilayer. Residues 94 to 110 (ENIWNQFNWPFGALLCR) lie on the Extracellular side of the membrane. Cysteines 109 and 188 form a disulfide. A helical membrane pass occupies residues 111 to 131 (GINGVIKANLFISIFLVVAIS). Topologically, residues 132–153 (QDRYCLLVHPMASRRRQRRRQA) are cytoplasmic. A helical membrane pass occupies residues 154-174 (RVTCVLIWVVGGLLSIPTFLL). Over 175 to 206 (RSIQAVPDLNITACILLLPHEAWHFARIVELN) the chain is Extracellular. Residue asparagine 184 is glycosylated (N-linked (GlcNAc...) asparagine). Residues 207 to 227 (ILAFLLPLAAIVFFNYHILAS) form a helical membrane-spanning segment. Residues 228-250 (LRGREEVSRTRCGGRKDSKTTAL) are Cytoplasmic-facing. Residues 251–271 (ILTLVVAFLVCWAPYHFFAFL) form a helical membrane-spanning segment. Topologically, residues 272-294 (EFLFQVQAIRSCFWEDFIDLGLQ) are extracellular. A helical membrane pass occupies residues 295–315 (LANFLAFTNSSLNPVIYVFVG). Topologically, residues 316–352 (RLFRTKVWELYKQCTPKSLAPISSSHRKEIFQLFWRN) are cytoplasmic. Cysteine 329 carries S-palmitoyl cysteine lipidation.

It belongs to the G-protein coupled receptor 1 family. Bradykinin receptor subfamily. BDKRB1 sub-subfamily.

Its subcellular location is the cell membrane. This is a receptor for bradykinin. Could be a factor in chronic pain and inflammation. The sequence is that of B1 bradykinin receptor (BDKRB1) from Chlorocebus pygerythrus (Vervet monkey).